A 175-amino-acid chain; its full sequence is B9 domain-containing protein 2 (175 aa).

Residues 2 to 118 (AEVHVIGQIM…DCPTWRPLGS (117 aa)) enclose the C2 B9-type domain.

Belongs to the B9D family. In terms of assembly, part of the tectonic-like complex (also named B9 complex). Interacts with TUBG1.

The protein resides in the cytoplasm. Its subcellular location is the cytoskeleton. It localises to the cilium basal body. The protein localises to the cilium axoneme. It is found in the nucleus. Component of the tectonic-like complex, a complex localized at the transition zone of primary cilia and acting as a barrier that prevents diffusion of transmembrane proteins between the cilia and plasma membranes. This Bos taurus (Bovine) protein is B9 domain-containing protein 2 (B9D2).